Consider the following 185-residue polypeptide: Anaphase-promoting complex subunit 10 (185 aa).

Residue Thr-2 is modified to N-acetylthreonine. Residues 2–185 (TTPNKTPPGA…IDFMMYRSIR (184 aa)) form the DOC domain. The residue at position 169 (Lys-169) is an N6-acetyllysine.

The protein belongs to the APC10 family. As to quaternary structure, the mammalian APC/C is composed at least of 14 distinct subunits ANAPC1, ANAPC2, CDC27/APC3, ANAPC4, ANAPC5, CDC16/APC6, ANAPC7, CDC23/APC8, ANAPC10, ANAPC11, CDC26/APC12, ANAPC13, ANAPC15 and ANAPC16 that assemble into a complex of at least 19 chains with a combined molecular mass of around 1.2 MDa; APC/C interacts with FZR1 and FBXO5. The C-terminus of APC10 binds to CDC27/APC3. Interacts with PIWIL1; interaction only takes place when PIWIL1 binds piRNA. Interacts with FBXO43; the interaction is direct.

Its pathway is protein modification; protein ubiquitination. Its function is as follows. Component of the anaphase promoting complex/cyclosome (APC/C), a cell cycle-regulated E3 ubiquitin ligase that controls progression through mitosis and the G1 phase of the cell cycle. The APC/C complex acts by mediating ubiquitination and subsequent degradation of target proteins: it mainly mediates the formation of 'Lys-11'-linked polyubiquitin chains and, to a lower extent, the formation of 'Lys-48'- and 'Lys-63'-linked polyubiquitin chains. The APC/C complex catalyzes assembly of branched 'Lys-11'-/'Lys-48'-linked branched ubiquitin chains on target proteins. This chain is Anaphase-promoting complex subunit 10 (Anapc10), found in Mus musculus (Mouse).